Consider the following 187-residue polypeptide: Large ribosomal subunit protein bL12cx (187 aa).

A chloroplast-targeting transit peptide spans 1 to 54; it reads MASTTLSIATTIRSSSPLTSASTHHFLSKPTAIEFPFRLSSSSSHRAINLRPIS.

This sequence belongs to the bacterial ribosomal protein bL12 family.

It localises to the plastid. It is found in the chloroplast. The polypeptide is Large ribosomal subunit protein bL12cx (RPL12C) (Arabidopsis thaliana (Mouse-ear cress)).